The following is a 469-amino-acid chain: Probable Xaa-Pro aminopeptidase PEPP (469 aa).

Aspartate 264, aspartate 275, glutamate 398, and glutamate 438 together coordinate Mn(2+).

Belongs to the peptidase M24B family. Mn(2+) is required as a cofactor.

It carries out the reaction Release of any N-terminal amino acid, including proline, that is linked to proline, even from a dipeptide or tripeptide.. In terms of biological role, catalyzes the removal of a penultimate prolyl residue from the N-termini of peptides. This chain is Probable Xaa-Pro aminopeptidase PEPP (PEPP), found in Ajellomyces capsulatus (strain G186AR / H82 / ATCC MYA-2454 / RMSCC 2432) (Darling's disease fungus).